The following is a 953-amino-acid chain: MNSTNSTNSTTTATSTNTSTQQVVTSLVSNGTIFGVFVIAFLILRIKLKRIYEPKSSFNLINEEKKPEPLPQGVWQWLKPLLKKSDNFVIQQAGLDGYFFLRYLFIIAIYCAVSMSYIFPILLSINASNGNHESGLNQLAYQNVKHRGRYFAHVFCGWIFFWGFLYIIYRELYFYTSMKQAVLASPRYAKKLSSRTVLFQTVPKQYLSEEEFSKLFDGVKRVWIARGSGSIEAMVKARDNMAIQLEGAETKYLKAALKKIKKLNKKSPQLSVSDNIAEYVPDKKRPHHKINKVAKFFFGKKVDTISYIKEELPKLNQKVKALQEDHENSSPFNSVFVEFESQYQAQVAAQITTYHAPLFMTPVYIGIEPSDVVWFNLRMFWWERLGREVSAVSAIVALVILWAFPVAFVGMISNITSLTNEVKWLKFIYKLPKQLLGLLTSLAPTVALAVLMSFLPKFIRGMAITQGAPSKQNVEYFTQQAYFAFQVIQVFLVTTLSSAATSTVTEIVKEPTKAMDLLASNLPKASNFFMSYVILQGLSISSGALLQIVPLILFYVLGAFLDGTVRKKWNRFCGLSSMQWGTAFPVYTNLAVITFSYSIISPLILLFAAVAFFLLYIAYLYNLTYVYQESPDARGIYYPRALFQTIVGIYIGQICLLGLFAVGKGWGPIVLQVIGICVTVLIHLHLSAAFDHLSKVIPVDTMKPLDGVSDTPSFKNIYKGIESTKVKKNTFGANIDMDGIKELPEFPIKKYHKRSESVTEQQVENSIFSENTFEYQFNPANEANADGHAINAENLIEDVPLLADGDTMKIPPAPWWKRFLKPHIYYSYKAVKSRLPEIYGLVDPDERVNDFDISHAYDYPAVSAQCPELWIPRDPFGFSKLLISDVSGVVEMNDENATIDENLKFTLRDVPPPYNDVKDEANGEANGEFDTASKENNPFADPKYKEEESRSAV.

Helical transmembrane passes span 23–43 (VVTS…AFLI), 103–123 (YLFI…PILL), 148–168 (GRYF…LYII), 392–412 (VSAI…VGMI), 435–455 (LLGL…MSFL), 481–501 (AYFA…SAAT), 540–560 (ISSG…LGAF), 575–595 (LSSM…VITF), 599–619 (IISP…YIAY), 642–662 (LFQT…LFAV), and 666–686 (WGPI…HLHL). The tract at residues 910-953 (VPPPYNDVKDEANGEANGEFDTASKENNPFADPKYKEEESRSAV) is disordered. Over residues 942-953 (PKYKEEESRSAV) the composition is skewed to basic and acidic residues. S949 carries the post-translational modification Phosphoserine.

The protein belongs to the CSC1 (TC 1.A.17) family.

Its subcellular location is the membrane. Functionally, acts as an osmosensitive calcium-permeable cation channel. This is an uncharacterized protein from Saccharomyces cerevisiae (strain ATCC 204508 / S288c) (Baker's yeast).